A 124-amino-acid polypeptide reads, in one-letter code: Large ribosomal subunit protein bL12 (124 aa).

It belongs to the bacterial ribosomal protein bL12 family. As to quaternary structure, homodimer. Part of the ribosomal stalk of the 50S ribosomal subunit. Forms a multimeric L10(L12)X complex, where L10 forms an elongated spine to which 2 to 4 L12 dimers bind in a sequential fashion. Binds GTP-bound translation factors.

Forms part of the ribosomal stalk which helps the ribosome interact with GTP-bound translation factors. Is thus essential for accurate translation. This is Large ribosomal subunit protein bL12 from Liberibacter africanus subsp. capensis.